Reading from the N-terminus, the 150-residue chain is Protein-export protein SecB (150 aa).

This sequence belongs to the SecB family. Homotetramer, a dimer of dimers. One homotetramer interacts with 1 SecA dimer.

It localises to the cytoplasm. Its function is as follows. One of the proteins required for the normal export of preproteins out of the cell cytoplasm. It is a molecular chaperone that binds to a subset of precursor proteins, maintaining them in a translocation-competent state. It also specifically binds to its receptor SecA. The chain is Protein-export protein SecB from Polaromonas sp. (strain JS666 / ATCC BAA-500).